Reading from the N-terminus, the 438-residue chain is Na(+)/H(+) antiporter NhaA (438 aa).

The next 11 helical transmembrane spans lie at 23–43, 62–82, 104–124, 133–153, 162–182, 185–205, 212–232, 302–322, 337–357, 372–392, and 410–430; these read FGGIFLFLNAVLAMVVANSFV, FFIGFSLHNWIDDVLMALFFL, SFPVIAAIGGMIAPGLIYFFL, GFGIPMATDIAFALGVIMLLG, VFLITLAVADDLGAIMVIALF, TNLKFAWLLGALGVVLVLALL, SLIPYLLLGVLLWFCVHQSGI, FLAPISGYFIMPLFAFANAGV, LGVILGLCLGKPLGIFLITFI, WWHILGAGFLAGIGFTMSMFI, and IAILLGSLISGIIGALYLFLL.

The protein belongs to the NhaA Na(+)/H(+) (TC 2.A.33) antiporter family.

The protein resides in the cell inner membrane. The enzyme catalyses Na(+)(in) + 2 H(+)(out) = Na(+)(out) + 2 H(+)(in). In terms of biological role, na(+)/H(+) antiporter that extrudes sodium in exchange for external protons. The polypeptide is Na(+)/H(+) antiporter NhaA (Helicobacter acinonychis (strain Sheeba)).